The chain runs to 68 residues: Protein transport protein Sec61 subunit gamma (68 aa).

Residues 1 to 32 (MDQIMQFVEPSRQFVKDSIRLVKRCTKPDRKE) are Cytoplasmic-facing. The chain crosses the membrane as a helical span at residues 33–61 (FQKIAMATAIGFAIMGFIGFFVKLIHIPI). The Extracellular segment spans residues 62–68 (NNIIVGG).

Belongs to the SecE/SEC61-gamma family. The SEC61 channel-forming translocon complex consists of channel-forming core components SEC61A1, SEC61B and SEC61G and different auxiliary components such as SEC62 and SEC63. The SEC61 channel associates with the multi-pass translocon (MPT) complex.

Its subcellular location is the endoplasmic reticulum membrane. In terms of biological role, component of SEC61 channel-forming translocon complex that mediates transport of signal peptide-containing precursor polypeptides across the endoplasmic reticulum (ER). Forms a ribosome receptor and a gated pore in the ER membrane, both functions required for cotranslational translocation of nascent polypeptides. The SEC61 channel is also involved in ER membrane insertion of transmembrane proteins: it mediates membrane insertion of the first few transmembrane segments of proteins, while insertion of subsequent transmembrane regions of multi-pass membrane proteins is mediated by the multi-pass translocon (MPT) complex. The chain is Protein transport protein Sec61 subunit gamma (sec61g) from Gadus morhua (Atlantic cod).